Consider the following 266-residue polypeptide: Serine/arginine-rich splicing factor 12 (266 aa).

The tract at residues Ala-42 to Trp-266 is disordered. Basic residues predominate over residues Arg-43–Arg-62. The segment covering Lys-102–His-114 has biased composition (basic and acidic residues). Positions Arg-115–Ser-127 are enriched in basic residues. The segment covering Gly-133–Glu-144 has biased composition (basic and acidic residues). Positions Ser-151–Ser-166 are enriched in low complexity. Positions Gly-183–Ser-194 are enriched in basic residues. 2 stretches are compositionally biased toward polar residues: residues Ser-202–Gly-212 and Ala-235–Gln-244. The segment covering Thr-245–Trp-266 has biased composition (basic residues).

Belongs to the splicing factor SR family.

It localises to the nucleus. In terms of biological role, splicing factor that seems to antagonize SR proteins in pre-mRNA splicing regulation. This Mus musculus (Mouse) protein is Serine/arginine-rich splicing factor 12 (Srsf12).